Consider the following 362-residue polypeptide: MAQLYSSVKPTPMLKDELDIVIPTIRNLDFLEMWRPFFEQYHLIIVQDGDPSKVINIPVGFDYELYNRNDINRILGPKASCISFKDSACRCFGYMVSKKKYIYTIDDDCFVAKDPTGKEINALEQHIKNLLSPSTPHFFNTLYDPYRDGADFVRGYPFSMREGAITAVSHGLWLNIPDYDAPTQLVKPLEKNSRYVDAVMTIPKGTLFPMCGMNLAFDRELIGPAMYFGLMGDGQPIGRYDDMWAGWCVKVICDHMGWGVKTGLPYIWHSKASNPFVNLKKEYNGIFWQEEAIPFFQSVTLPKECTSVQQCYLELAKLVREKLGKVDPYFITLATGMVTWIEAWEELNSAEGTEAEAPKGKN.

The DXD motif motif lies at 106–108 (DDD). R154 carries N-linked (Glc...) arginine glycosylation.

It belongs to the RGP family. As to quaternary structure, heterodimer with RGP1. It depends on Mn(2+) as a cofactor. Mg(2+) is required as a cofactor. Post-translationally, reversibly glycosylated in vitro by UDP-glucose, UDP-xylose and UDP-galactose, but not UDP-mannose. Specifically expressed in developing seeds.

It localises to the cytoplasm. Its subcellular location is the cytosol. The protein localises to the golgi apparatus. It carries out the reaction UDP-beta-L-arabinofuranose = UDP-beta-L-arabinopyranose. Functionally, UDP-L-arabinose mutase involved in the biosynthesis of cell wall non-cellulosic polysaccharides. Catalyzes the interconvertion of UDP-L-arabinopyranose (UDP-Arap) and UDP-L-arabinofuranose (UDP-Araf). Preferentially catalyzes the formation of UDP-Arap from UDP-Araf. At thermodynamic equilibrium in vitro the ratio of the pyranose form over the furanose form is 95:5. Is not active on other UDP-sugars (UDP-Gal, UDP-Xyl, UDP-Glc, GDP-Man and GDP-Fuc). Is probably active as heteromer in vivo. This Arabidopsis thaliana (Mouse-ear cress) protein is UDP-arabinopyranose mutase 3.